Reading from the N-terminus, the 145-residue chain is Probable DNA-directed RNA polymerases I and III subunit RPAC2 (145 aa).

The interval 1 to 52 (MGKKSEKKVVEETMEVDEQPAVEPEAVPEEEPEVEDEDLNVPKKKKMEILDP) is disordered. The segment covering 12 to 39 (ETMEVDEQPAVEPEAVPEEEPEVEDEDL) has biased composition (acidic residues).

This sequence belongs to the archaeal Rpo11/eukaryotic RPB11/RPC19 RNA polymerase subunit family. Component of the RNA polymerase I (Pol I) and RNA polymerase III (Pol III) complexes consisting of at least 13 and 17 subunits, respectively.

It localises to the nucleus. DNA-dependent RNA polymerase catalyzes the transcription of DNA into RNA using the four ribonucleoside triphosphates as substrates. Common core component of RNA polymerases I and III which synthesize ribosomal RNA precursors and small RNAs, such as 5S rRNA and tRNAs, respectively. The protein is Probable DNA-directed RNA polymerases I and III subunit RPAC2 (rpac-19) of Caenorhabditis briggsae.